We begin with the raw amino-acid sequence, 220 residues long: Aspartic protease inhibitor 5 (220 aa).

An N-terminal signal peptide occupies residues 1–23 (MMKCLFLLCLCLLPIVVFSSTFT). The propeptide occupies 24 to 32 (SQNLIDLPS). Positions 26–31 (NLIDLP) match the Vacuolar targeting signal motif. N-linked (GlcNAc...) asparagine glycosylation is present at Asn51. Cystine bridges form between Cys80–Cys125 and Cys174–Cys185.

The protein belongs to the protease inhibitor I3 (leguminous Kunitz-type inhibitor) family.

It is found in the vacuole. Functionally, inhibitor of cathepsin D (aspartic protease). May also inhibit trypsin and chymotrypsin (serine proteases). Protects the plant by inhibiting proteases of invading organisms. The polypeptide is Aspartic protease inhibitor 5 (Solanum tuberosum (Potato)).